A 404-amino-acid polypeptide reads, in one-letter code: S-adenosylmethionine synthase (404 aa).

Residues 1-13 show a composition bias toward polar residues; the sequence is MSQSRYFFTSESV. Residues 1 to 20 are disordered; it reads MSQSRYFFTSESVSEGHPDK. His17 provides a ligand contact to ATP. Residue Asp19 coordinates Mg(2+). Glu45 contacts K(+). Residues Glu58 and Gln101 each coordinate L-methionine. Residues 101 to 111 form a flexible loop region; that stretch reads QSPDINRGVDR. ATP-binding positions include 172–174, 245–246, Asp254, 260–261, Ala277, and Lys281; these read DAK, RF, and RK. Asp254 contacts L-methionine. Lys285 contacts L-methionine.

It belongs to the AdoMet synthase family. In terms of assembly, homotetramer; dimer of dimers. It depends on Mg(2+) as a cofactor. K(+) serves as cofactor.

Its subcellular location is the cytoplasm. The catalysed reaction is L-methionine + ATP + H2O = S-adenosyl-L-methionine + phosphate + diphosphate. Its pathway is amino-acid biosynthesis; S-adenosyl-L-methionine biosynthesis; S-adenosyl-L-methionine from L-methionine: step 1/1. Catalyzes the formation of S-adenosylmethionine (AdoMet) from methionine and ATP. The overall synthetic reaction is composed of two sequential steps, AdoMet formation and the subsequent tripolyphosphate hydrolysis which occurs prior to release of AdoMet from the enzyme. This chain is S-adenosylmethionine synthase, found in Chlorobium limicola (strain DSM 245 / NBRC 103803 / 6330).